Reading from the N-terminus, the 82-residue chain is Consomatin Mao1 (82 aa).

A signal peptide spans 1-22 (MQTASWVMVMMMVWITAPLSEG). Residues 23–57 (GKLNDVIRGLVPDDVTPQLILRSLFFHRPSDSVVR) constitute a propeptide that is removed on maturation. Cys-65 and Cys-70 are oxidised to a cystine. Trp-67 carries the post-translational modification D-tryptophan. Pro-71, Pro-72, and Pro-74 each carry 4-hydroxyproline. Positions 75–82 (WRRPNGKG) are excised as a propeptide.

Belongs to the conotoxin C superfamily. Consomatin family. As to expression, expressed by the venom duct.

The protein resides in the secreted. Its function is as follows. Moderately activates human somatostatin receptors (SSTR) with a preferential activation of SSTR1 and SSTR4. In vivo, does not cause behavioral changes in mice within a few minutes of intracranial injection, but causes a progressive loss of movement thereafter. Four to five hours after injection, mice recover, even with the highest dose tested. Shows antinociception and antihyperalgesia activities in two mouse models of acute pain, most probably by acting outside the central nervous system. This chain is Consomatin Mao1, found in Conus maioensis (Sea snail).